Consider the following 430-residue polypeptide: Protein IQ-DOMAIN 3 (430 aa).

The tract at residues 1-36 (MGKSWFSAVKKALSPEPKQKKEQKPHKSKKWFGKSK) is disordered. The short motif at 9–16 (VKKALSPE) is the Nuclear localization signal 1 element. Basic residues predominate over residues 23 to 35 (QKPHKSKKWFGKS). The 29-residue stretch at 107–135 (EEIAAIKIQTAFRGYMARRALRALRGLVR) folds into the IQ domain. A coiled-coil region spans residues 170 to 224 (RLRLSEDKQALTRQLQQKHNKDFDKTGENWNDSTLSREKVEANMLNKQVATMRRE). Positions 213 to 231 (MLNKQVATMRREKALAYAF) are calmodulin-binding. Disordered stretches follow at residues 271–368 (ENHS…SQSV) and 385–430 (SNLS…TNLA). A compositionally biased stretch (low complexity) spans 286 to 295 (ARSVASRAMS). Over residues 326–340 (SEDSNSIVSFQSEQP) the composition is skewed to polar residues. The short motif at 396 to 403 (AKKRLSFS) is the Nuclear localization signal 2 element.

The protein belongs to the IQD family. In terms of assembly, binds to multiple calmodulin (CaM) in the presence of Ca(2+) and CaM-like proteins.

It localises to the nucleus. The protein resides in the nucleolus. The protein localises to the cytoplasm. Its subcellular location is the cytoskeleton. Its function is as follows. May be involved in cooperative interactions with calmodulins or calmodulin-like proteins. Recruits calmodulin proteins to microtubules, thus being a potential scaffold in cellular signaling and trafficking. May associate with nucleic acids and regulate gene expression at the transcriptional or post-transcriptional level. The polypeptide is Protein IQ-DOMAIN 3 (Arabidopsis thaliana (Mouse-ear cress)).